A 429-amino-acid polypeptide reads, in one-letter code: GTPase Obg (429 aa).

The Obg domain occupies 1–158 (MFYDTAKIYV…RWLLLELKLL (158 aa)). In terms of domain architecture, OBG-type G spans 159 to 329 (ADVGLVGYPN…LIYRLWEIIS (171 aa)). Residues 165 to 172 (GYPNAGKS), 190 to 194 (FTTLT), 212 to 215 (DIPG), 282 to 285 (NKMD), and 310 to 312 (SAL) each bind GTP. Mg(2+)-binding residues include Ser-172 and Thr-192. The OCT domain maps to 344–421 (IKEQPEEGFV…IGKFEFYFVD (78 aa)).

Belongs to the TRAFAC class OBG-HflX-like GTPase superfamily. OBG GTPase family. In terms of assembly, monomer. The cofactor is Mg(2+).

Its subcellular location is the cytoplasm. Its function is as follows. An essential GTPase which binds GTP, GDP and possibly (p)ppGpp with moderate affinity, with high nucleotide exchange rates and a fairly low GTP hydrolysis rate. Plays a role in control of the cell cycle, stress response, ribosome biogenesis and in those bacteria that undergo differentiation, in morphogenesis control. The protein is GTPase Obg of Carboxydothermus hydrogenoformans (strain ATCC BAA-161 / DSM 6008 / Z-2901).